A 154-amino-acid polypeptide reads, in one-letter code: tRNA (cytidine(34)-2'-O)-methyltransferase (154 aa).

L78, G100, I122, and S130 together coordinate S-adenosyl-L-methionine.

Belongs to the class IV-like SAM-binding methyltransferase superfamily. RNA methyltransferase TrmH family. TrmL subfamily. In terms of assembly, homodimer.

The protein localises to the cytoplasm. It catalyses the reaction cytidine(34) in tRNA + S-adenosyl-L-methionine = 2'-O-methylcytidine(34) in tRNA + S-adenosyl-L-homocysteine + H(+). The enzyme catalyses 5-carboxymethylaminomethyluridine(34) in tRNA(Leu) + S-adenosyl-L-methionine = 5-carboxymethylaminomethyl-2'-O-methyluridine(34) in tRNA(Leu) + S-adenosyl-L-homocysteine + H(+). Functionally, methylates the ribose at the nucleotide 34 wobble position in the two leucyl isoacceptors tRNA(Leu)(CmAA) and tRNA(Leu)(cmnm5UmAA). Catalyzes the methyl transfer from S-adenosyl-L-methionine to the 2'-OH of the wobble nucleotide. This chain is tRNA (cytidine(34)-2'-O)-methyltransferase, found in Saccharophagus degradans (strain 2-40 / ATCC 43961 / DSM 17024).